The following is a 456-amino-acid chain: Major facilitator superfamily domain-containing protein 10 (456 aa).

The next 3 membrane-spanning stretches (helical) occupy residues 25–45 (VIIV…LLLP), 87–107 (VLFG…SAPL), and 114–136 (YLGR…AVWA). Asn159 carries an N-linked (GlcNAc...) asparagine glycan. A run of 8 helical transmembrane segments spans residues 179–199 (AVIG…GAFL), 203–223 (MVPW…FCFL), 278–298 (LVYF…SFLA), 311–328 (KMFF…GTYA), 345–365 (LLLV…TLGL), 366–386 (GLML…TMVS), 403–423 (SLGA…YWLT), and 424–444 (GAQV…LLLW).

The protein belongs to the major facilitator superfamily. As to expression, esxpressed in luminal membrane of renal tubules. Expressed at the surface of eosinophils (at protein level).

Its subcellular location is the nucleus inner membrane. The protein resides in the cell membrane. Functionally, probable organic anion transporter which may serve as a transporter for some non-steroidal anti-inflammatory drugs (NSAIDs) as well as other organic anions across the luminal membranes of renal proximal tubules at the final excretion step into the urine. In Mus musculus (Mouse), this protein is Major facilitator superfamily domain-containing protein 10 (Mfsd10).